A 215-amino-acid chain; its full sequence is Phosphatidylserine decarboxylase proenzyme (215 aa).

The Schiff-base intermediate with substrate; via pyruvic acid role is filled by S184. S184 bears the Pyruvic acid (Ser); by autocatalysis mark.

Belongs to the phosphatidylserine decarboxylase family. PSD-A subfamily. Heterodimer of a large membrane-associated beta subunit and a small pyruvoyl-containing alpha subunit. Pyruvate serves as cofactor. Is synthesized initially as an inactive proenzyme. Formation of the active enzyme involves a self-maturation process in which the active site pyruvoyl group is generated from an internal serine residue via an autocatalytic post-translational modification. Two non-identical subunits are generated from the proenzyme in this reaction, and the pyruvate is formed at the N-terminus of the alpha chain, which is derived from the carboxyl end of the proenzyme. The post-translation cleavage follows an unusual pathway, termed non-hydrolytic serinolysis, in which the side chain hydroxyl group of the serine supplies its oxygen atom to form the C-terminus of the beta chain, while the remainder of the serine residue undergoes an oxidative deamination to produce ammonia and the pyruvoyl prosthetic group on the alpha chain.

The protein resides in the cell membrane. It carries out the reaction a 1,2-diacyl-sn-glycero-3-phospho-L-serine + H(+) = a 1,2-diacyl-sn-glycero-3-phosphoethanolamine + CO2. Its pathway is phospholipid metabolism; phosphatidylethanolamine biosynthesis; phosphatidylethanolamine from CDP-diacylglycerol: step 2/2. Catalyzes the formation of phosphatidylethanolamine (PtdEtn) from phosphatidylserine (PtdSer). In Ralstonia pickettii (strain 12J), this protein is Phosphatidylserine decarboxylase proenzyme.